The sequence spans 475 residues: Ribulose bisphosphate carboxylase large chain (475 aa).

Positions 1 to 2 (MV) are excised as a propeptide. Residue P3 is modified to N-acetylproline. K14 carries the N6,N6,N6-trimethyllysine modification. Substrate-binding residues include N123 and T173. K175 (proton acceptor) is an active-site residue. K177 lines the substrate pocket. Mg(2+) is bound by residues K201, D203, and E204. Position 201 is an N6-carboxylysine (K201). Residue H294 is the Proton acceptor of the active site. Residues R295, H327, and S379 each coordinate substrate.

It belongs to the RuBisCO large chain family. Type I subfamily. Heterohexadecamer of 8 large chains and 8 small chains. Requires Mg(2+) as cofactor.

It is found in the plastid. It localises to the chloroplast. It carries out the reaction 2 (2R)-3-phosphoglycerate + 2 H(+) = D-ribulose 1,5-bisphosphate + CO2 + H2O. It catalyses the reaction D-ribulose 1,5-bisphosphate + O2 = 2-phosphoglycolate + (2R)-3-phosphoglycerate + 2 H(+). Its function is as follows. RuBisCO catalyzes two reactions: the carboxylation of D-ribulose 1,5-bisphosphate, the primary event in carbon dioxide fixation, as well as the oxidative fragmentation of the pentose substrate in the photorespiration process. Both reactions occur simultaneously and in competition at the same active site. This is Ribulose bisphosphate carboxylase large chain from Chlamydomonas moewusii (Chlamydomonas eugametos).